Consider the following 76-residue polypeptide: Large ribosomal subunit protein bL31 (76 aa).

Zn(2+) contacts are provided by Cys-16, Cys-18, Cys-37, and Cys-40.

It belongs to the bacterial ribosomal protein bL31 family. Type A subfamily. As to quaternary structure, part of the 50S ribosomal subunit. The cofactor is Zn(2+).

In terms of biological role, binds the 23S rRNA. In Solibacter usitatus (strain Ellin6076), this protein is Large ribosomal subunit protein bL31.